The primary structure comprises 141 residues: Sperm-associated microtubule inner protein 10 (141 aa).

The segment covering 1–16 (MASEKDDGPALPKLDD) has biased composition (basic and acidic residues). The segment at 1 to 33 (MASEKDDGPALPKLDDDNQTAENTCKPAEEQPQ) is disordered.

As to quaternary structure, microtubule inner protein component of sperm flagellar doublet microtubules. In terms of tissue distribution, expressed predominantly in the testis.

Its subcellular location is the cytoplasm. It is found in the cytoskeleton. The protein resides in the flagellum axoneme. Microtubule inner protein (MIP) part of the dynein-decorated doublet microtubules (DMTs) in flagellum axoneme, which is required for flagellum beating. May serve to reinforce and thus stabilize the microtubule structure in the sperm flagella. Involved in the regulation of sperm motility. The sequence is that of Sperm-associated microtubule inner protein 10 (Spmip10) from Mus musculus (Mouse).